An 89-amino-acid polypeptide reads, in one-letter code: Small ribosomal subunit protein uS15 (89 aa).

It belongs to the universal ribosomal protein uS15 family. In terms of assembly, part of the 30S ribosomal subunit. Forms a bridge to the 50S subunit in the 70S ribosome, contacting the 23S rRNA.

Functionally, one of the primary rRNA binding proteins, it binds directly to 16S rRNA where it helps nucleate assembly of the platform of the 30S subunit by binding and bridging several RNA helices of the 16S rRNA. Its function is as follows. Forms an intersubunit bridge (bridge B4) with the 23S rRNA of the 50S subunit in the ribosome. This chain is Small ribosomal subunit protein uS15, found in Mycobacterium avium (strain 104).